The sequence spans 189 residues: High affinity copper uptake protein 1 (189 aa).

The Extracellular segment spans residues 1 to 67; it reads MDHSAHMGMS…AGLVINTAGE (67 aa). The Methionine segments (Mets) motif motif lies at 13–18; it reads MGMSDM. Residues 15–36 form a disordered region; sequence MSDMNHSTTMPPSHHHPTSSGS. Residues 20–36 are compositionally biased toward low complexity; that stretch reads HSTTMPPSHHHPTSSGS. The chain crosses the membrane as a helical span at residues 68 to 88; it reads MAGAFVAVFLLAMFYEGLKIA. The Cytoplasmic segment spans residues 89-131; it reads REGLLRKSQVSIRYNSMPVPGPNGTILMETHKTVGQQMLSFPH. The residue at position 113 (T113) is a Phosphothreonine. Residues 132–152 form a helical membrane-spanning segment; it reads LLQTVLHIIQVVISYFLMLIF. The Extracellular portion of the chain corresponds to 153 to 155; that stretch reads MTY. The helical transmembrane segment at 156–176 threads the bilayer; that stretch reads NGYLCIAVAAGAGTGYFLFSW. The Cytoplasmic portion of the chain corresponds to 177–189; that stretch reads KKAVVVDITEHCH. C188 carries the cysteine sulfenic acid (-SOH) modification.

This sequence belongs to the copper transporter (Ctr) (TC 1.A.56) family. SLC31A subfamily. In terms of assembly, homotrimer; is stabilized by cisplatin via interactions between cisplatin and the methionine-rich clusters, and could be crucial for the copper(2+) reduction process and copper(1+) stabilization. Heterotrimer between SLC31A1, CCS and SOD1; this heterotrimer is copper(1+)-mediated and its maintenance is regulated through SOD1 activation. Interacts with KDR; this interaction is induced upon VEGFA stimulation leading to SLC31A1 and KDR subsequent co-internalization to early endosomes, thereby activating KDR downstream signaling in endothelial cells. Interacts (via C-terminal domain) with ATOX1 (via dimer form); this interaction improves ATOX1 stability and controls intracellular copper(1+) levels. Interacts with SLC31A2; this interaction stabilizes SLC31A2 and protects its from ubiquitination and degradation. Interacts (via C-terminal domain) with CCS; this interaction is copper(1+)-mediated. Post-translationally, proteolytic cleavage, leading to a truncated form, is facilitated by SLC31A2 and initiated preferentially by CTSL and to a minor extend by CTSB in endolysosomal compartments. A post-CTSL/cathepsin L processing occurs to yield to the fully truncated form. Sulfenylated at Cys-188 after stimulation with VEGFA, which induces SLC31A1-KDR disulfide bond formation and their co-internalization to early endosomes, driving to a sustained VEGFR2 signaling.

It localises to the cell membrane. Its subcellular location is the early endosome membrane. It is found in the recycling endosome membrane. The protein resides in the apical cell membrane. The protein localises to the late endosome membrane. It localises to the basolateral cell membrane. The catalysed reaction is Ag(+)(out) = Ag(+)(in). The enzyme catalyses Cu(+)(out) = Cu(+)(in). Its function is as follows. Uniporter that mediates the transport of copper(1+) from the extracellular space to the cytoplasm, across the plasma membrane and delivers directly copper(1+) to specific chaperone such as ATOX1, via a copper(1+)- mediated transient interaction between the C-terminal domain and a copper(1+) chaperone, thus controlling intracellular copper(1+) levels. May function in copper(1+) import from the apical membrane thus may drive intestinal copper absorption. The copper(1+) transport mechanism is sodium-independent, saturable and of high-affinity. Also mediates the uptake of silver(1+). May function in the influx of the platinum-containing chemotherapeutic agents. The platinum-containing chemotherapeutic agents uptake is saturable. In vitro, mediates the transport of cadmium(2+) into cells. Also participates in the first step of copper(2+) acquisition by cells through a direct transfer of copper(2+) from copper(2+) carriers in blood, such as ALB to the N-terminal domain of SLC31A1, leading to copper(2+) reduction and probably followed by copper(1+) stabilization. In addition, functions as a redox sensor to promote angiogenesis in endothelial cells, in a copper(1+) transport independent manner, by transmitting the VEGF-induced ROS signal through a sulfenylation at Cys-189 leadin g to a subsequent disulfide bond formation between SLC31A1 and KDR. The SLC31A1-KDR complex is then co-internalized to early endosomes, driving a sustained VEGFR2 signaling. Functionally, mobilizes copper(1+) out of the endosomal compartment, making copper(1+) available for export out of the cells. The polypeptide is High affinity copper uptake protein 1 (Sus scrofa (Pig)).